Here is an 882-residue protein sequence, read N- to C-terminus: DNA mismatch repair protein MutS (882 aa).

Residue 640-647 (GPNMGGKS) coordinates ATP.

This sequence belongs to the DNA mismatch repair MutS family.

In terms of biological role, this protein is involved in the repair of mismatches in DNA. It is possible that it carries out the mismatch recognition step. This protein has a weak ATPase activity. This chain is DNA mismatch repair protein MutS, found in Albidiferax ferrireducens (strain ATCC BAA-621 / DSM 15236 / T118) (Rhodoferax ferrireducens).